The following is a 337-amino-acid chain: MSENVPDHQSTNGFSSSDFFVPEEEAGKKVVLSKLVTLMRKLSEQGIDAQNCPPGVRSCLICPKCEVGDSGEKSLTLYIYPDGSSAKWTCRRKCGLKGVLQVDGKLVSKDPIGKVERKITVESIKLEPLCDEIQDFFAARAISGKTLERNRVMQKRIDDEIVIAFTYWQRGELVSCKYRSLTKKFVQERNTRKILYGLDDIEETSEIIIVEGEPDKLAMEEAGFFNCVSVPDGAPETVSSKEIPSESKDTAFKYIWNCNDYLKKASRIVIATDGDGPGQALAEELARRLGKERCWLVKWPKKSEDEHFKDANEVLMSKGPHLLKEAILNAEPYPLKS.

In terms of domain architecture, Toprim spans 205-304 (SEIIIVEGEP…WLVKWPKKSE (100 aa)). The Mg(2+) site is built by Glu211, Asp273, and Asp275.

The cofactor is Mg(2+).

In terms of biological role, may act as a DNA primase. The sequence is that of Primase homolog protein from Arabidopsis thaliana (Mouse-ear cress).